The sequence spans 375 residues: Quinolinate synthase (375 aa).

2 residues coordinate iminosuccinate: His-47 and Ser-64. Cys-110 serves as a coordination point for [4Fe-4S] cluster. Iminosuccinate is bound by residues 144–146 (YVN) and Ser-165. Cys-235 serves as a coordination point for [4Fe-4S] cluster. Iminosuccinate contacts are provided by residues 261–263 (HPE) and Thr-278. Cys-325 provides a ligand contact to [4Fe-4S] cluster.

This sequence belongs to the quinolinate synthase family. Type 3 subfamily. [4Fe-4S] cluster is required as a cofactor.

It localises to the cytoplasm. The enzyme catalyses iminosuccinate + dihydroxyacetone phosphate = quinolinate + phosphate + 2 H2O + H(+). The protein operates within cofactor biosynthesis; NAD(+) biosynthesis; quinolinate from iminoaspartate: step 1/1. In terms of biological role, catalyzes the condensation of iminoaspartate with dihydroxyacetone phosphate to form quinolinate. In Herpetosiphon aurantiacus (strain ATCC 23779 / DSM 785 / 114-95), this protein is Quinolinate synthase.